A 308-amino-acid chain; its full sequence is ATP synthase gamma chain (308 aa).

This sequence belongs to the ATPase gamma chain family. As to quaternary structure, F-type ATPases have 2 components, CF(1) - the catalytic core - and CF(0) - the membrane proton channel. CF(1) has five subunits: alpha(3), beta(3), gamma(1), delta(1), epsilon(1). CF(0) has three main subunits: a, b and c.

It is found in the cell inner membrane. Functionally, produces ATP from ADP in the presence of a proton gradient across the membrane. The gamma chain is believed to be important in regulating ATPase activity and the flow of protons through the CF(0) complex. This is ATP synthase gamma chain from Bartonella tribocorum (strain CIP 105476 / IBS 506).